The chain runs to 367 residues: Leu/Ile/Val-binding protein BraC3 (367 aa).

Residues 1–22 form the signal peptide; the sequence is MTLKTLTATLVASLAFAPLAHA.

It belongs to the leucine-binding protein family. As to quaternary structure, the complex is composed of two ATP-binding proteins (BraF and BraG), two transmembrane proteins (BraD and BraE) and a solute-binding protein (BraC or BraC3).

It is found in the periplasm. Part of the ABC transporter complex BraDEFGC/C3 involved in transport of branched-chain amino acids Leu, Ile and Val (LIV). Essential for the development of bacteroids, the differentiated legume-symbiotic forms of this bacterium, and for the effective N(2) fixation by them. The protein is Leu/Ile/Val-binding protein BraC3 of Rhizobium johnstonii (strain DSM 114642 / LMG 32736 / 3841) (Rhizobium leguminosarum bv. viciae).